Reading from the N-terminus, the 584-residue chain is Protein spire homolog 1 (584 aa).

Positions 1–30 (MANTVEADGSNDEGYEAAEEGPEDEEDEKR) are disordered. Residues 1-73 (MANTVEADGS…RALFAETMEL (73 aa)) enclose the KIND domain. A compositionally biased stretch (acidic residues) spans 9-28 (GSNDEGYEAAEEGPEDEEDE). The stretch at 71–99 (MELHTFLAKVKSAKENLKKIQEMEKSDES) forms a coiled coil. 2 consecutive WH2 domains span residues 147 to 165 (PYEM…LRKV) and 211 to 228 (LHER…LRPV). Residues 224–238 (KLRPVSPEEIRRSRL) show a composition bias toward basic and acidic residues. Positions 224–366 (KLRPVSPEEI…PTNVRQFLPP (143 aa)) are disordered. Ser-229 carries the post-translational modification Phosphoserine. A compositionally biased stretch (polar residues) spans 242–272 (TPESTKNLMESSMVNGGLTSQTKENGLSSAE). 3 positions are modified to phosphoserine: Ser-292, Ser-293, and Ser-295. Residues 302 to 320 (KSTSSSSVSPSFPEEPVLE) show a composition bias toward low complexity. Phosphothreonine is present on Thr-337. Residues 340–356 (PERRQPPQRRHSIEKET) show a composition bias toward basic and acidic residues. Polar residues predominate over residues 357 to 366 (PTNVRQFLPP). A spir-box region spans residues 384-404 (LALTVEEVMHIRQVLVKAELE). A phosphoserine mark is found at Ser-506, Ser-510, and Ser-563.

The protein belongs to the spire family. In terms of assembly, interacts with FMN2.

The protein localises to the cytoplasm. Its subcellular location is the cytoskeleton. It localises to the cytosol. The protein resides in the cleavage furrow. It is found in the perinuclear region. The protein localises to the cell membrane. Its subcellular location is the cytoplasmic vesicle membrane. Functionally, acts as an actin nucleation factor, remains associated with the slow-growing pointed end of the new filament. Involved in intracellular vesicle transport along actin fibers, providing a novel link between actin cytoskeleton dynamics and intracellular transport. Required for asymmetric spindle positioning and asymmetric cell division during meiosis. Required for normal formation of the cleavage furrow and for polar body extrusion during female germ cell meiosis. Also acts in the nucleus: together with FMN2, promotes assembly of nuclear actin filaments in response to DNA damage in order to facilitate movement of chromatin and repair factors after DNA damage. In addition, promotes innate immune signaling downstream of dsRNA sensing. Mechanistically, contributes to IRF3 phosphorylation and activation downstream of MAVS and upstream of TBK1. This chain is Protein spire homolog 1 (SPIRE1), found in Macaca fascicularis (Crab-eating macaque).